We begin with the raw amino-acid sequence, 130 residues long: Small ribosomal subunit protein uS8 (130 aa).

The protein belongs to the universal ribosomal protein uS8 family. In terms of assembly, part of the 30S ribosomal subunit.

Functionally, one of the primary rRNA binding proteins, it binds directly to 16S rRNA central domain where it helps coordinate assembly of the platform of the 30S subunit. This chain is Small ribosomal subunit protein uS8, found in Methanosphaera stadtmanae (strain ATCC 43021 / DSM 3091 / JCM 11832 / MCB-3).